A 91-amino-acid chain; its full sequence is Small ribosomal subunit protein uS19 (91 aa).

The protein belongs to the universal ribosomal protein uS19 family.

Functionally, protein S19 forms a complex with S13 that binds strongly to the 16S ribosomal RNA. The chain is Small ribosomal subunit protein uS19 from Acinetobacter baumannii (strain AB307-0294).